Reading from the N-terminus, the 269-residue chain is Formamidopyrimidine-DNA glycosylase (269 aa).

Proline 2 acts as the Schiff-base intermediate with DNA in catalysis. The active-site Proton donor is glutamate 3. Residue lysine 57 is the Proton donor; for beta-elimination activity of the active site. Residues histidine 90, arginine 109, and lysine 150 each coordinate DNA. The segment at 235-269 (QVYGRKGEPCRVCGTPIVATKHAQRATFYCRHCQK) adopts an FPG-type zinc-finger fold. Arginine 259 functions as the Proton donor; for delta-elimination activity in the catalytic mechanism.

This sequence belongs to the FPG family. As to quaternary structure, monomer. Zn(2+) is required as a cofactor.

The catalysed reaction is Hydrolysis of DNA containing ring-opened 7-methylguanine residues, releasing 2,6-diamino-4-hydroxy-5-(N-methyl)formamidopyrimidine.. It catalyses the reaction 2'-deoxyribonucleotide-(2'-deoxyribose 5'-phosphate)-2'-deoxyribonucleotide-DNA = a 3'-end 2'-deoxyribonucleotide-(2,3-dehydro-2,3-deoxyribose 5'-phosphate)-DNA + a 5'-end 5'-phospho-2'-deoxyribonucleoside-DNA + H(+). In terms of biological role, involved in base excision repair of DNA damaged by oxidation or by mutagenic agents. Acts as a DNA glycosylase that recognizes and removes damaged bases. Has a preference for oxidized purines, such as 7,8-dihydro-8-oxoguanine (8-oxoG). Has AP (apurinic/apyrimidinic) lyase activity and introduces nicks in the DNA strand. Cleaves the DNA backbone by beta-delta elimination to generate a single-strand break at the site of the removed base with both 3'- and 5'-phosphates. This chain is Formamidopyrimidine-DNA glycosylase, found in Salmonella choleraesuis (strain SC-B67).